A 90-amino-acid chain; its full sequence is Probable oxaloacetate decarboxylase gamma chain 2 (90 aa).

The chain crosses the membrane as a helical span at residues 10 to 32 (GINLLTLGMGFVFIFLIFLVYAT).

It belongs to the OadG family. As to quaternary structure, heterotrimer of an alpha, a beta and a gamma subunit. Na(+) serves as cofactor.

Its subcellular location is the cell membrane. It carries out the reaction oxaloacetate + 2 Na(+)(in) + H(+) = pyruvate + 2 Na(+)(out) + CO2. Catalyzes the decarboxylation of oxaloacetate coupled to Na(+) translocation. The protein is Probable oxaloacetate decarboxylase gamma chain 2 (oadG2) of Vibrio cholerae serotype O1 (strain ATCC 39315 / El Tor Inaba N16961).